Reading from the N-terminus, the 485-residue chain is MAPVVILFFLFPTLLVLVVAVLGLRGGDDSWKKRGLKVPPGSMGWPLLGETIAFRRLHPCTSLGEYMEEHVNKYGKIYRSNLFGAPTIVSADAELNRFVLMNDERLFEPCFPKSVADILGHTSMLVLTGEMHRYMKSLSVNFMGIARLRNNFLGDSELYITQNFNRWKENIPFPAKEEACKVTFNLMVKNILSLNPGEPESEHLRKLYMSFMKGVVAIPLNLPGTAYKKAIQSRATILKMIEKLMEERIRNKKAGTDKIGEADLLGFILEQSNLDAEQFGDLLLGLLFGGHETSATAITLVIYFLYDCPKAVDHLREEHLGIVRAKKARGEPPALTWDDYKQMEFSQCVVSETLRLGNIIKFVHRKAKTDVQFKGYDIPKGWSVIPVFAAAHLDPSVYENPQKFDPWRWQTISTGTARIDNYMPFGQGLRNCAGLELAKMEIVVFLHHLTLNFDWEMAEPDHPLAYAFPDFPKGLPIKVRRLALK.

Residues 4–24 (VVILFFLFPTLLVLVVAVLGL) traverse the membrane as a helical segment. Residue C432 participates in heme binding.

The protein belongs to the cytochrome P450 family. In terms of tissue distribution, mainly expressed in leaves and, at low levels, in roots and stems.

It localises to the membrane. It carries out the reaction cholesterol + 2 reduced [NADPH--hemoprotein reductase] + 2 O2 = (16S,22S)-dihydroxycholesterol + 2 oxidized [NADPH--hemoprotein reductase] + 2 H2O + 2 H(+). Its pathway is steroid metabolism; cholesterol metabolism. In terms of biological role, involved in the biosynthesis of spiroketal steroid and saponin natural products from cholesterol such as diosgenin and analogs (e.g. furostanol and spirostanol), plant defense compounds used as main precursors for the industrial production of steroid hormones. During the 5,6-spiroketalization of cholesterol, catalyzes the hydroxylation of cholesterol to form 16S,22S-dihydroxycholesterol and, possibly, the subsequent conversion of 16S,22S-dihydroxycholesterol into 16-oxo-22-hydroxy-cholesterol and 16-hydroxy-22-oxo-cholesterol. 16-hydroxy-22-oxo-cholesterol submit a spontaneous reaction leading to the production of furostanol-type steroid diastereomers, precursors of diosgenin. This is Cholesterol 16,22-dihydroxylase CYP90G4 from Paris polyphylla (Daiswa polyphylla).